The primary structure comprises 170 residues: Cyclic pyranopterin monophosphate synthase (170 aa).

Substrate-binding positions include 75-77 (MCH) and 115-116 (ME). Asp130 is an active-site residue.

The protein belongs to the MoaC family. Homohexamer; trimer of dimers.

It carries out the reaction (8S)-3',8-cyclo-7,8-dihydroguanosine 5'-triphosphate = cyclic pyranopterin phosphate + diphosphate. The protein operates within cofactor biosynthesis; molybdopterin biosynthesis. In terms of biological role, catalyzes the conversion of (8S)-3',8-cyclo-7,8-dihydroguanosine 5'-triphosphate to cyclic pyranopterin monophosphate (cPMP). The chain is Cyclic pyranopterin monophosphate synthase from Bacillus velezensis (strain DSM 23117 / BGSC 10A6 / LMG 26770 / FZB42) (Bacillus amyloliquefaciens subsp. plantarum).